The chain runs to 445 residues: Probable D-serine dehydratase (445 aa).

At K111 the chain carries N6-(pyridoxal phosphate)lysine.

Belongs to the serine/threonine dehydratase family. DsdA subfamily. Pyridoxal 5'-phosphate is required as a cofactor.

The enzyme catalyses D-serine = pyruvate + NH4(+). The sequence is that of Probable D-serine dehydratase from Burkholderia pseudomallei (strain 1710b).